We begin with the raw amino-acid sequence, 233 residues long: Large ribosomal subunit protein uL1 (233 aa).

Belongs to the universal ribosomal protein uL1 family. In terms of assembly, part of the 50S ribosomal subunit.

Its function is as follows. Binds directly to 23S rRNA. The L1 stalk is quite mobile in the ribosome, and is involved in E site tRNA release. Functionally, protein L1 is also a translational repressor protein, it controls the translation of the L11 operon by binding to its mRNA. The sequence is that of Large ribosomal subunit protein uL1 from Shewanella piezotolerans (strain WP3 / JCM 13877).